The following is a 186-amino-acid chain: UPF0398 protein BPUM_1952 (186 aa).

It belongs to the UPF0398 family.

In Bacillus pumilus (strain SAFR-032), this protein is UPF0398 protein BPUM_1952.